Reading from the N-terminus, the 198-residue chain is Phosphoheptose isomerase (198 aa).

Residues 34-196 enclose the SIS domain; the sequence is IVEALIRGNK…DDSLFPADHG (163 aa). 49–51 is a binding site for substrate; sequence NGG. Residues histidine 58 and asparagine 62 each coordinate Zn(2+). Substrate is bound by residues asparagine 62, 91-92, 117-119, serine 122, and glutamine 172; these read ND and STS. Zn(2+) is bound by residues glutamine 172 and histidine 180.

Belongs to the SIS family. GmhA subfamily. Homotetramer. Requires Zn(2+) as cofactor.

The protein resides in the cytoplasm. The enzyme catalyses 2 D-sedoheptulose 7-phosphate = D-glycero-alpha-D-manno-heptose 7-phosphate + D-glycero-beta-D-manno-heptose 7-phosphate. The protein operates within carbohydrate biosynthesis; D-glycero-D-manno-heptose 7-phosphate biosynthesis; D-glycero-alpha-D-manno-heptose 7-phosphate and D-glycero-beta-D-manno-heptose 7-phosphate from sedoheptulose 7-phosphate: step 1/1. In terms of biological role, catalyzes the isomerization of sedoheptulose 7-phosphate in D-glycero-D-manno-heptose 7-phosphate. This Alteromonas mediterranea (strain DSM 17117 / CIP 110805 / LMG 28347 / Deep ecotype) protein is Phosphoheptose isomerase.